The primary structure comprises 74 residues: U4-theraphotoxin-Cg1a (74 aa).

An N-terminal signal peptide occupies residues 1-19 (MNATIFALLLLLNLAMYNA). A propeptide spanning residues 20-39 (AEQSSETDMDDTLLIPEINR) is cleaved from the precursor. Disulfide bonds link Cys-42–Cys-56, Cys-49–Cys-61, and Cys-55–Cys-71.

Belongs to the neurotoxin 36 family. 01 subfamily. As to expression, expressed by the venom gland.

It localises to the secreted. Its function is as follows. Probable ion channel inhibitor. In Chilobrachys guangxiensis (Chinese earth tiger tarantula), this protein is U4-theraphotoxin-Cg1a.